We begin with the raw amino-acid sequence, 264 residues long: Virulence plasmid ParA family protein pGP5-D (264 aa).

9-16 (FKGGTGKT) provides a ligand contact to ATP.

Belongs to the ParA family.

Its function is as follows. Required for growth within mammalian cells. This is Virulence plasmid ParA family protein pGP5-D from Chlamydia trachomatis.